The sequence spans 616 residues: Dihydroxy-acid dehydratase (616 aa).

Mg(2+) is bound at residue Asp81. Cys122 lines the [2Fe-2S] cluster pocket. Residues Asp123 and Lys124 each contribute to the Mg(2+) site. At Lys124 the chain carries N6-carboxylysine. A [2Fe-2S] cluster-binding site is contributed by Cys195. Glu491 contributes to the Mg(2+) binding site. Ser517 (proton acceptor) is an active-site residue.

The protein belongs to the IlvD/Edd family. As to quaternary structure, homodimer. [2Fe-2S] cluster is required as a cofactor. Mg(2+) serves as cofactor.

It carries out the reaction (2R)-2,3-dihydroxy-3-methylbutanoate = 3-methyl-2-oxobutanoate + H2O. The catalysed reaction is (2R,3R)-2,3-dihydroxy-3-methylpentanoate = (S)-3-methyl-2-oxopentanoate + H2O. It functions in the pathway amino-acid biosynthesis; L-isoleucine biosynthesis; L-isoleucine from 2-oxobutanoate: step 3/4. The protein operates within amino-acid biosynthesis; L-valine biosynthesis; L-valine from pyruvate: step 3/4. Functions in the biosynthesis of branched-chain amino acids. Catalyzes the dehydration of (2R,3R)-2,3-dihydroxy-3-methylpentanoate (2,3-dihydroxy-3-methylvalerate) into 2-oxo-3-methylpentanoate (2-oxo-3-methylvalerate) and of (2R)-2,3-dihydroxy-3-methylbutanoate (2,3-dihydroxyisovalerate) into 2-oxo-3-methylbutanoate (2-oxoisovalerate), the penultimate precursor to L-isoleucine and L-valine, respectively. The sequence is that of Dihydroxy-acid dehydratase from Escherichia coli (strain 55989 / EAEC).